The chain runs to 471 residues: Glutamate--tRNA ligase 1 (471 aa).

The 'HIGH' region signature appears at 15–25 (PSPTGYLHIGG). A 'KMSKS' region motif is present at residues 243–247 (KLSKR). Lys-246 contacts ATP.

This sequence belongs to the class-I aminoacyl-tRNA synthetase family. Glutamate--tRNA ligase type 1 subfamily. As to quaternary structure, monomer.

The protein resides in the cytoplasm. It carries out the reaction tRNA(Glu) + L-glutamate + ATP = L-glutamyl-tRNA(Glu) + AMP + diphosphate. In terms of biological role, catalyzes the attachment of glutamate to tRNA(Glu) in a two-step reaction: glutamate is first activated by ATP to form Glu-AMP and then transferred to the acceptor end of tRNA(Glu). This chain is Glutamate--tRNA ligase 1, found in Dinoroseobacter shibae (strain DSM 16493 / NCIMB 14021 / DFL 12).